The chain runs to 89 residues: Teretoxin Tan22.12 (89 aa).

The first 22 residues, 1–22 (MKVLFTLAMIVVTLCLGQRMRR), serve as a signal peptide directing secretion.

It belongs to the teretoxin C (TC) superfamily. Contains 4 disulfide bonds. As to expression, expressed by the venom duct.

It localises to the secreted. The polypeptide is Teretoxin Tan22.12 (Terebra anilis (Auger snail)).